A 404-amino-acid chain; its full sequence is MKRTIIMMLDSFGVGASADAASFGDVGSDTFGHIAKACAEGKADIGREGPLKLPNLARLGLGHAAMESTGAFAPGFGDNVELIGAYGHAQELSSGKDTPSGHWEMAGVPVLFEWGYFSEHQNSFPKELTDKILARAGLDGFLGNCHASGTTILEELGEEHMRSGMPIFYTSADSVFQIACHEETFGLDNLYRLCEITREELEPYNIGRVIARPFDGTGPSDFARTGNRKDYSLAPPAKTVLDKLNEAGGEVVSVGKIADIYAYCGITKKVKANGLEALFDATLAEVKSAGDNTIVFTNFVDFDSHYGHRRDVAGYAKGLEYFDARLPEMLALLGEDDLLILTADHGCDPTWQGTDHTREYVPVLAFGAGLKAGSLGRRKSFADIGQSIASHFKLEPMAYGESFL.

6 residues coordinate Mn(2+): D10, D303, H308, D344, H345, and H356.

This sequence belongs to the phosphopentomutase family. The cofactor is Mn(2+).

It localises to the cytoplasm. It carries out the reaction 2-deoxy-alpha-D-ribose 1-phosphate = 2-deoxy-D-ribose 5-phosphate. It catalyses the reaction alpha-D-ribose 1-phosphate = D-ribose 5-phosphate. Its pathway is carbohydrate degradation; 2-deoxy-D-ribose 1-phosphate degradation; D-glyceraldehyde 3-phosphate and acetaldehyde from 2-deoxy-alpha-D-ribose 1-phosphate: step 1/2. Isomerase that catalyzes the conversion of deoxy-ribose 1-phosphate (dRib-1-P) and ribose 1-phosphate (Rib-1-P) to deoxy-ribose 5-phosphate (dRib-5-P) and ribose 5-phosphate (Rib-5-P), respectively. This chain is Phosphopentomutase, found in Shewanella baltica (strain OS155 / ATCC BAA-1091).